Consider the following 154-residue polypeptide: Endoribonuclease YbeY (154 aa).

Zn(2+) contacts are provided by H118, H122, and H128.

Belongs to the endoribonuclease YbeY family. Requires Zn(2+) as cofactor.

It localises to the cytoplasm. Functionally, single strand-specific metallo-endoribonuclease involved in late-stage 70S ribosome quality control and in maturation of the 3' terminus of the 16S rRNA. This chain is Endoribonuclease YbeY, found in Macrococcus caseolyticus (strain JCSC5402) (Macrococcoides caseolyticum).